The following is a 375-amino-acid chain: CCN family member 1 (375 aa).

The first 22 residues, 1 to 22 (MGSAGARPALAAALLCLARLAL), serve as a signal peptide directing secretion. One can recognise an IGFBP N-terminal domain in the interval 23 to 94 (GSPCPAVCQC…AATNGICRAQ (72 aa)). Disulfide bonds link C26-C50, C30-C52, C32-C53, C39-C56, C64-C78, and C70-C91. Residues 98-164 (RPCEYNSKIY…GQCCEEWVCD (67 aa)) enclose the VWFC domain. The region spanning 223 to 268 (KCIVQTTSWSQCSKTCGTGISTRVTNDNPDCKLIKETRICEVRPCG) is the TSP type-1 domain. A heparin-binding region spans residues 274–310 (SLKKGKKCTKTKKSPSPVRFTYAGCSSVKKYRPKYCG). Intrachain disulfides connect C281/C318, C298/C332, C309/C348, C312/C350, and C317/C354. In terms of domain architecture, CTCK spans 281–355 (CTKTKKSPSP…QSCRCNYNCP (75 aa)).

Belongs to the CCN family.

It localises to the secreted. Functionally, probable secreted regulatory protein. The polypeptide is CCN family member 1 (CCN1) (Gallus gallus (Chicken)).